Consider the following 304-residue polypeptide: Acetylglutamate kinase (304 aa).

Substrate contacts are provided by residues 75 to 76 (GG), R97, and N202.

It belongs to the acetylglutamate kinase family. ArgB subfamily.

The protein resides in the cytoplasm. It catalyses the reaction N-acetyl-L-glutamate + ATP = N-acetyl-L-glutamyl 5-phosphate + ADP. It participates in amino-acid biosynthesis; L-arginine biosynthesis; N(2)-acetyl-L-ornithine from L-glutamate: step 2/4. In terms of biological role, catalyzes the ATP-dependent phosphorylation of N-acetyl-L-glutamate. This is Acetylglutamate kinase from Parvibaculum lavamentivorans (strain DS-1 / DSM 13023 / NCIMB 13966).